The chain runs to 340 residues: Methionine import ATP-binding protein MetN 1 (340 aa).

The ABC transporter domain maps to 2–242 (IRLENVSVDF…PQHAYTKQLV (241 aa)). 39-46 (GTSGAGKS) lines the ATP pocket.

This sequence belongs to the ABC transporter superfamily. Methionine importer (TC 3.A.1.24) family. The complex is composed of two ATP-binding proteins (MetN), two transmembrane proteins (MetI) and a solute-binding protein (MetQ).

It localises to the cell inner membrane. It carries out the reaction L-methionine(out) + ATP + H2O = L-methionine(in) + ADP + phosphate + H(+). The enzyme catalyses D-methionine(out) + ATP + H2O = D-methionine(in) + ADP + phosphate + H(+). Part of the ABC transporter complex MetNIQ involved in methionine import. Responsible for energy coupling to the transport system. This Pectobacterium atrosepticum (strain SCRI 1043 / ATCC BAA-672) (Erwinia carotovora subsp. atroseptica) protein is Methionine import ATP-binding protein MetN 1.